A 290-amino-acid polypeptide reads, in one-letter code: Virginiamycin B lyase (290 aa).

Histidine 226 contributes to the substrate binding site. A Mg(2+)-binding site is contributed by glutamate 265. The active-site Proton acceptor is histidine 267. Glutamate 282 contacts Mg(2+).

It belongs to the Vgb family. Monomer. Mg(2+) is required as a cofactor.

In terms of biological role, inactivates the type B streptogramin antibiotics by linearizing the lactone ring at the ester linkage, generating a free phenylglycine carboxylate and converting the threonyl moiety into 2-amino-butenoic acid. The protein is Virginiamycin B lyase of Mycolicibacterium vanbaalenii (strain DSM 7251 / JCM 13017 / BCRC 16820 / KCTC 9966 / NRRL B-24157 / PYR-1) (Mycobacterium vanbaalenii).